We begin with the raw amino-acid sequence, 72 residues long: Translation initiation factor IF-1 (72 aa).

The region spanning 1–72 (MSKEEVLEFS…TKGRITYRYK (72 aa)) is the S1-like domain.

Belongs to the IF-1 family. As to quaternary structure, component of the 30S ribosomal translation pre-initiation complex which assembles on the 30S ribosome in the order IF-2 and IF-3, IF-1 and N-formylmethionyl-tRNA(fMet); mRNA recruitment can occur at any time during PIC assembly.

The protein localises to the cytoplasm. One of the essential components for the initiation of protein synthesis. Stabilizes the binding of IF-2 and IF-3 on the 30S subunit to which N-formylmethionyl-tRNA(fMet) subsequently binds. Helps modulate mRNA selection, yielding the 30S pre-initiation complex (PIC). Upon addition of the 50S ribosomal subunit IF-1, IF-2 and IF-3 are released leaving the mature 70S translation initiation complex. The polypeptide is Translation initiation factor IF-1 (Bartonella tribocorum (strain CIP 105476 / IBS 506)).